We begin with the raw amino-acid sequence, 253 residues long: uncharacterized protein (253 aa).

N-acetylalanine is present on A2.

This sequence belongs to the NAD(P)-dependent epimerase/dehydratase family. As to quaternary structure, homodimer.

This is an uncharacterized protein from Arabidopsis thaliana (Mouse-ear cress).